The chain runs to 138 residues: uncharacterized protein (138 aa).

The interval 1–73 (MCSAGQLLGG…NHTGEPVGDD (73 aa)) is disordered. Over residues 7 to 18 (LLGGGGGGGGSG) the composition is skewed to gly residues. Residues 19 to 29 (GERDEDRDALA) are compositionally biased toward basic and acidic residues. The segment covering 30 to 43 (ERAAAGTEQESGAS) has biased composition (low complexity). The helical transmembrane segment at 106-126 (VIVIFFWVMLWFLGLPAFGLV) threads the bilayer.

Belongs to the FAM241 family.

Its subcellular location is the membrane. This is an uncharacterized protein from Bos taurus (Bovine).